The sequence spans 400 residues: Hyaluronidase (400 aa).

Residues 1–19 (MQTILVLTTFLSAWFLAVG) form the signal peptide. 5 disulfides stabilise this stretch: C31–C319, C196–C209, C344–C355, C349–C384, and C386–C395. E120 acts as the Proton donor in catalysis. N-linked (GlcNAc...) asparagine glycosylation is found at N129 and N166. Residues N243 and N275 are each glycosylated (N-linked (GlcNAc...) asparagine). The region spanning 340–396 (NVARCSKQACSGRGRCTWPKDTSVIAWKFLVEKEDYDFYLGDIECKCVEGYEGRYCE) is the EGF-like domain.

The protein belongs to the glycosyl hydrolase 56 family. As to quaternary structure, monomer. In terms of tissue distribution, expressed by the venom gland.

It is found in the secreted. The catalysed reaction is Random hydrolysis of (1-&gt;4)-linkages between N-acetyl-beta-D-glucosamine and D-glucuronate residues in hyaluronate.. Its function is as follows. Spider venom endo-hyaluronidase that is able to degrade purified hyaluronic acid (HA) and chondroitin sulfate (CS). Has no activity on dermatan sulfate (DS) and heparan sulfate (HS). Also increases the dermonecrotic effect of the dermonecrotic toxin (AC P0CE80), when injected in rabbit skin, supporting the hypothesis that venom hyaluronidases are spreading factors. This Loxosceles intermedia (Brown spider) protein is Hyaluronidase.